A 349-amino-acid chain; its full sequence is Alpha-centractin (349 aa).

Methionine 1 is modified (N-acetylmethionine).

It belongs to the actin family. ARP1 subfamily. As to quaternary structure, part of the ACTR1A/ACTB filament around which the dynactin complex is built. The filament contains 8 copies of ACTR1A and 1 ACTB. Interacts with dynein and adapters such as BICD2. Interacts with BCCIP (isoform 2/alpha).

Its subcellular location is the cytoplasm. The protein localises to the cytoskeleton. The protein resides in the microtubule organizing center. It is found in the centrosome. It localises to the cell cortex. Its function is as follows. Part of the ACTR1A/ACTB filament around which the dynactin complex is built. The dynactin multiprotein complex activates the molecular motor dynein for ultra-processive transport along microtubules. The sequence is that of Alpha-centractin (ACTR1A) from Sus scrofa (Pig).